Reading from the N-terminus, the 896-residue chain is Protein translocase subunit SecA (896 aa).

ATP is bound by residues Q87, 105–109 (GEGKT), and D507. The disordered stretch occupies residues 855-879 (LSENDEASETQTFRRQEKKIGRNDP). Residues 866–876 (TFRRQEKKIGR) are compositionally biased toward basic and acidic residues. 4 residues coordinate Zn(2+): C880, C882, C891, and H892.

The protein belongs to the SecA family. In terms of assembly, monomer and homodimer. Part of the essential Sec protein translocation apparatus which comprises SecA, SecYEG and auxiliary proteins SecDF-YajC and YidC. The cofactor is Zn(2+).

The protein resides in the cell inner membrane. It is found in the cytoplasm. It carries out the reaction ATP + H2O + cellular proteinSide 1 = ADP + phosphate + cellular proteinSide 2.. Its function is as follows. Part of the Sec protein translocase complex. Interacts with the SecYEG preprotein conducting channel. Has a central role in coupling the hydrolysis of ATP to the transfer of proteins into and across the cell membrane, serving both as a receptor for the preprotein-SecB complex and as an ATP-driven molecular motor driving the stepwise translocation of polypeptide chains across the membrane. This is Protein translocase subunit SecA from Legionella pneumophila (strain Lens).